Here is a 137-residue protein sequence, read N- to C-terminus: Large ribosomal subunit protein uL16 (137 aa).

It belongs to the universal ribosomal protein uL16 family. In terms of assembly, part of the 50S ribosomal subunit.

In terms of biological role, binds 23S rRNA and is also seen to make contacts with the A and possibly P site tRNAs. This is Large ribosomal subunit protein uL16 from Psychrobacter arcticus (strain DSM 17307 / VKM B-2377 / 273-4).